The following is a 1431-amino-acid chain: MAFRKENKIKSNFSKITIGLASPEEILENSSGEVLKPETINYRTYKPERDGLFCERIFGPIKDYECHCGKYKRIRYKGIVCDRCGVEVTEKKVRRERMGHIHLVVPVAHIWYFRSLPNKIGYLLGLPTKKLDSIIYYERYVVIQPGCVDTVGELDLLSEEEYLDILDSLPRENQLLEDTDPNKFIAKIGAEAVYDLLARLDLDSLSYELRHRANTDTSQQRKNEALKRLQVVESFRASRGRNKPEWMIMKVIPVIPPELRPLVPLDGGRFATSDLNDLYRRVIIRNNRLKRLIDIKAPEVILRNEKRMLQEAVDSLFDNSRKSSAVKTDANRPLKSLSDSLKGKQGRFRQNLLGKRVDYSARSVIVVGPELKMHECGLPKNMAAELYKPFVIRKLIECGIVKTVKSAKKIVDRKEPVVWDILEYVMKGHPVLLNRAPTLHRLGIQAFQPKLIEGKAIQLHPLACTAFNADFDGDQMAVHLPLGNEAVLEAQMLMLASHNILNPANGAPITVPSQDMVLGLYYITKLRKGTQGEGLTFYGPEEATIAYNEKKLDIHAPIHVYVEDLDENGNLVKTMVETSVGRLMVNEFVPKEIGYVNEVLGKKSLRDIIGRVIKACGVARTAQFLDDIKNLGYYMAFKGGLSFNLADVLIPPEKDELVQKGYDEVEQIMANYNMGFITNNERYNQIIDTWTHVNSNLSNILIKQLTADNDGFNSIYMMMDSGARGSKEQIRQLSGMRGLMAKPQKSGAEGGQIIENPILSNFKEGLSVLEYFISTHGARKGLADTALKTADAGYLTRRLVDVSHDVIVNEEDCGTLRGLVCTELKNNEEVIASLYERILGRVSVHDVIHPITGEVIVRSGEEIREDAAKAIQDSPIESVEIRSVLTCESKKGVCAKCYGRNLATNRMVQKGEVVGVIAAQSIGEPGTQLTLRTFHVGGIASNIATENSITSKYDGILEIDELRAVEAVDEVSGKKHLVVVSRLAEMRIVDPNTKIVLLTHNIPYGSKLFFNNGDSIKKGDVIIEWDPFNAVIVSEVSGKIEFESLVENVTYKVESDETTGLKEKIIIESKDKTKAPAAHIVDENGNYLKNYSLPLGAHVVKDNGDVVKAGEVLVKIPRAVGKAGDITGGLPRVTELFEARNPSNPAVVSEIDGEVGFGKIKRGNREITVTSKLGEVKKYMVPLSKQLLVQENDYIRAGMPLSDGATTPSDILAIKGPTAVQEYIVNEVQDVYRLQGVKINDKHFEVIVRQMMRKVEVVDPGDTRFLEQQIVDKLEVMDENDRIWGKKVVTDPGDSQTLQAGQIVTARKLRDENSMLKRRDLKLVEVRDAIPATANQILQGITRAALQTNSFMSAASFQETTKVLNEAAINGKVDRLEGLKENVICGHLIPAGTGQREFDKLIVGAKDEFDRIFANRKNVVDFNAMDKDDEE.

4 residues coordinate Zn(2+): cysteine 66, cysteine 68, cysteine 81, and cysteine 84. Aspartate 470, aspartate 472, and aspartate 474 together coordinate Mg(2+). Cysteine 813, cysteine 887, cysteine 894, and cysteine 897 together coordinate Zn(2+).

The protein belongs to the RNA polymerase beta' chain family. The RNAP catalytic core consists of 2 alpha, 1 beta, 1 beta' and 1 omega subunit. When a sigma factor is associated with the core the holoenzyme is formed, which can initiate transcription. Mg(2+) is required as a cofactor. The cofactor is Zn(2+).

The enzyme catalyses RNA(n) + a ribonucleoside 5'-triphosphate = RNA(n+1) + diphosphate. In terms of biological role, DNA-dependent RNA polymerase catalyzes the transcription of DNA into RNA using the four ribonucleoside triphosphates as substrates. This is DNA-directed RNA polymerase subunit beta' from Parabacteroides distasonis (strain ATCC 8503 / DSM 20701 / CIP 104284 / JCM 5825 / NCTC 11152).